The sequence spans 109 residues: T cell receptor alpha variable 25 (109 aa).

Positions 1–19 (MLLITSMLVLWMQLSQVNG) are cleaved as a signal peptide. The Ig-like domain occupies 20-109 (QQVMQIPQYQ…TDVGTYFCAG (90 aa)). Cys-41 and Cys-107 form a disulfide bridge. N-linked (GlcNAc...) asparagine glycans are attached at residues Asn-42 and Asn-89.

Alpha-beta TR is a heterodimer composed of an alpha and beta chain; disulfide-linked. The alpha-beta TR is associated with the transmembrane signaling CD3 coreceptor proteins to form the TR-CD3 (TcR or TCR). The assembly of alpha-beta TR heterodimers with CD3 occurs in the endoplasmic reticulum where a single alpha-beta TR heterodimer associates with one CD3D-CD3E heterodimer, one CD3G-CD3E heterodimer and one CD247 homodimer forming a stable octameric structure. CD3D-CD3E and CD3G-CD3E heterodimers preferentially associate with TR alpha and TR beta chains, respectively. The association of the CD247 homodimer is the last step of TcR assembly in the endoplasmic reticulum and is required for transport to the cell surface.

The protein localises to the cell membrane. V region of the variable domain of T cell receptor (TR) alpha chain that participates in the antigen recognition. Alpha-beta T cell receptors are antigen specific receptors which are essential to the immune response and are present on the cell surface of T lymphocytes. Recognize peptide-major histocompatibility (MH) (pMH) complexes that are displayed by antigen presenting cells (APC), a prerequisite for efficient T cell adaptive immunity against pathogens. Binding of alpha-beta TR to pMH complex initiates TR-CD3 clustering on the cell surface and intracellular activation of LCK that phosphorylates the ITAM motifs of CD3G, CD3D, CD3E and CD247 enabling the recruitment of ZAP70. In turn ZAP70 phosphorylates LAT, which recruits numerous signaling molecules to form the LAT signalosome. The LAT signalosome propagates signal branching to three major signaling pathways, the calcium, the mitogen-activated protein kinase (MAPK) kinase and the nuclear factor NF-kappa-B (NF-kB) pathways, leading to the mobilization of transcription factors that are critical for gene expression and essential for T cell growth and differentiation. The T cell repertoire is generated in the thymus, by V-(D)-J rearrangement. This repertoire is then shaped by intrathymic selection events to generate a peripheral T cell pool of self-MH restricted, non-autoaggressive T cells. Post-thymic interaction of alpha-beta TR with the pMH complexes shapes TR structural and functional avidity. The sequence is that of T cell receptor alpha variable 25 from Homo sapiens (Human).